The chain runs to 1337 residues: DNA-directed RNA polymerase subunit beta' (1337 aa).

Cys-60, Cys-62, Cys-75, and Cys-78 together coordinate Zn(2+). 3 residues coordinate Mg(2+): Asp-536, Asp-538, and Asp-540. The Zn(2+) site is built by Cys-895, Cys-974, Cys-981, and Cys-984.

It belongs to the RNA polymerase beta' chain family. The RNAP catalytic core consists of 2 alpha, 1 beta, 1 beta' and 1 omega subunit. When a sigma factor is associated with the core the holoenzyme is formed, which can initiate transcription. Mg(2+) is required as a cofactor. It depends on Zn(2+) as a cofactor.

It carries out the reaction RNA(n) + a ribonucleoside 5'-triphosphate = RNA(n+1) + diphosphate. Its function is as follows. DNA-dependent RNA polymerase catalyzes the transcription of DNA into RNA using the four ribonucleoside triphosphates as substrates. The chain is DNA-directed RNA polymerase subunit beta' from Bifidobacterium adolescentis (strain ATCC 15703 / DSM 20083 / NCTC 11814 / E194a).